The following is a 103-amino-acid chain: Small ribosomal subunit protein uS10 (103 aa).

Belongs to the universal ribosomal protein uS10 family. Part of the 30S ribosomal subunit.

In terms of biological role, involved in the binding of tRNA to the ribosomes. The polypeptide is Small ribosomal subunit protein uS10 (Chromohalobacter salexigens (strain ATCC BAA-138 / DSM 3043 / CIP 106854 / NCIMB 13768 / 1H11)).